Consider the following 363-residue polypeptide: GDSL esterase/lipase At2g24560 (363 aa).

The signal sequence occupies residues 1 to 22 (MSTSKTITFTLFIAALLSSCDA). The N-linked (GlcNAc...) asparagine glycan is linked to Asn-25. Ser-41 functions as the Nucleophile in the catalytic mechanism. Asn-103 and Asn-325 each carry an N-linked (GlcNAc...) asparagine glycan. Active-site residues include Asp-333 and His-336.

It belongs to the 'GDSL' lipolytic enzyme family.

It is found in the secreted. The chain is GDSL esterase/lipase At2g24560 from Arabidopsis thaliana (Mouse-ear cress).